The primary structure comprises 60 residues: Large ribosomal subunit protein bL32 (60 aa).

Residues 1 to 23 are disordered; it reads MAVPARHTSKAKKNKRRTHYKLT. Residues 7 to 20 show a composition bias toward basic residues; sequence HTSKAKKNKRRTHY.

The protein belongs to the bacterial ribosomal protein bL32 family.

This chain is Large ribosomal subunit protein bL32, found in Streptococcus equi subsp. equi (strain 4047).